The sequence spans 878 residues: DNA mismatch repair protein MutS (878 aa).

Position 618 to 625 (glycine 618 to serine 625) interacts with ATP. 2 stretches are compositionally biased toward basic and acidic residues: residues leucine 800–proline 811 and glycine 863–arginine 878. 2 disordered regions span residues leucine 800 to leucine 842 and serine 859 to arginine 878.

This sequence belongs to the DNA mismatch repair MutS family.

Its function is as follows. This protein is involved in the repair of mismatches in DNA. It is possible that it carries out the mismatch recognition step. This protein has a weak ATPase activity. The polypeptide is DNA mismatch repair protein MutS (Alkalilimnicola ehrlichii (strain ATCC BAA-1101 / DSM 17681 / MLHE-1)).